We begin with the raw amino-acid sequence, 166 residues long: Large ribosomal subunit protein uL10 (166 aa).

It belongs to the universal ribosomal protein uL10 family. As to quaternary structure, part of the ribosomal stalk of the 50S ribosomal subunit. The N-terminus interacts with L11 and the large rRNA to form the base of the stalk. The C-terminus forms an elongated spine to which L12 dimers bind in a sequential fashion forming a multimeric L10(L12)X complex.

In terms of biological role, forms part of the ribosomal stalk, playing a central role in the interaction of the ribosome with GTP-bound translation factors. In Pseudomonas fluorescens (strain ATCC BAA-477 / NRRL B-23932 / Pf-5), this protein is Large ribosomal subunit protein uL10.